Here is a 154-residue protein sequence, read N- to C-terminus: Xanthine-guanine phosphoribosyltransferase (154 aa).

5-phospho-alpha-D-ribose 1-diphosphate is bound by residues 37–38 (RG), arginine 69, and 88–96 (EDLVDSGDT). Arginine 69 serves as a coordination point for GMP. Aspartate 89 is a Mg(2+) binding site. Residues aspartate 92 and isoleucine 135 each contribute to the guanine site. Xanthine contacts are provided by aspartate 92 and isoleucine 135. GMP contacts are provided by residues 92 to 96 (DSGDT) and 134 to 135 (WI).

This sequence belongs to the purine/pyrimidine phosphoribosyltransferase family. XGPT subfamily. In terms of assembly, homotetramer. Requires Mg(2+) as cofactor.

The protein resides in the cell inner membrane. The catalysed reaction is GMP + diphosphate = guanine + 5-phospho-alpha-D-ribose 1-diphosphate. The enzyme catalyses XMP + diphosphate = xanthine + 5-phospho-alpha-D-ribose 1-diphosphate. It carries out the reaction IMP + diphosphate = hypoxanthine + 5-phospho-alpha-D-ribose 1-diphosphate. It functions in the pathway purine metabolism; GMP biosynthesis via salvage pathway; GMP from guanine: step 1/1. The protein operates within purine metabolism; XMP biosynthesis via salvage pathway; XMP from xanthine: step 1/1. In terms of biological role, purine salvage pathway enzyme that catalyzes the transfer of the ribosyl-5-phosphate group from 5-phospho-alpha-D-ribose 1-diphosphate (PRPP) to the N9 position of the 6-oxopurines guanine and xanthine to form the corresponding ribonucleotides GMP (guanosine 5'-monophosphate) and XMP (xanthosine 5'-monophosphate), with the release of PPi. To a lesser extent, also acts on hypoxanthine. This Vibrio parahaemolyticus serotype O3:K6 (strain RIMD 2210633) protein is Xanthine-guanine phosphoribosyltransferase.